Consider the following 180-residue polypeptide: MSELTVVAQPYAKAAFDYARDVECLDDWQQMFAITQVVLEQPNTLLVLNDLDEDGSEQPLLDLILHAGGEWLNKNFENFLRIMEENKRLKALSEVNVQFQEMKADYERTMTVTVRVSEPLDEEQMARLKQALTEKYGKAITLETQLDPSLVGGVVITAGQTVYDGSVLTNLSRLATNLHV.

It belongs to the ATPase delta chain family. As to quaternary structure, F-type ATPases have 2 components, F(1) - the catalytic core - and F(0) - the membrane proton channel. F(1) has five subunits: alpha(3), beta(3), gamma(1), delta(1), epsilon(1). F(0) has three main subunits: a(1), b(2) and c(10-14). The alpha and beta chains form an alternating ring which encloses part of the gamma chain. F(1) is attached to F(0) by a central stalk formed by the gamma and epsilon chains, while a peripheral stalk is formed by the delta and b chains.

It localises to the cell inner membrane. F(1)F(0) ATP synthase produces ATP from ADP in the presence of a proton or sodium gradient. F-type ATPases consist of two structural domains, F(1) containing the extramembraneous catalytic core and F(0) containing the membrane proton channel, linked together by a central stalk and a peripheral stalk. During catalysis, ATP synthesis in the catalytic domain of F(1) is coupled via a rotary mechanism of the central stalk subunits to proton translocation. Its function is as follows. This protein is part of the stalk that links CF(0) to CF(1). It either transmits conformational changes from CF(0) to CF(1) or is implicated in proton conduction. The sequence is that of ATP synthase subunit delta 2 from Vibrio campbellii (strain ATCC BAA-1116).